A 240-amino-acid polypeptide reads, in one-letter code: Transmembrane emp24 domain-containing protein 6 (240 aa).

An N-terminal signal peptide occupies residues Met1–Ser21. The Lumenal portion of the chain corresponds to Gln22–Tyr200. The region spanning Thr53–Val138 is the GOLD domain. N-linked (GlcNAc...) asparagine glycosylation is found at Asn107 and Asn156. Residues Val201–Leu223 form a helical membrane-spanning segment. At Lys224 to Cys240 the chain is on the cytoplasmic side.

This sequence belongs to the EMP24/GP25L family.

It is found in the endoplasmic reticulum membrane. This is Transmembrane emp24 domain-containing protein 6 (TMED6) from Homo sapiens (Human).